The primary structure comprises 320 residues: Cytochrome f (320 aa).

Residues 1–35 form the signal peptide; it reads MQTRNAFSWLKKQITRSISVSLMIYILTRTSISSA. Heme contacts are provided by Tyr36, Cys56, Cys59, and His60. Residues 286-305 form a helical membrane-spanning segment; that stretch reads VQGLLFFLASVILAQIFLVL.

This sequence belongs to the cytochrome f family. As to quaternary structure, the 4 large subunits of the cytochrome b6-f complex are cytochrome b6, subunit IV (17 kDa polypeptide, petD), cytochrome f and the Rieske protein, while the 4 small subunits are PetG, PetL, PetM and PetN. The complex functions as a dimer. Heme is required as a cofactor.

Its subcellular location is the plastid. The protein localises to the chloroplast thylakoid membrane. Its function is as follows. Component of the cytochrome b6-f complex, which mediates electron transfer between photosystem II (PSII) and photosystem I (PSI), cyclic electron flow around PSI, and state transitions. This chain is Cytochrome f, found in Atropa belladonna (Belladonna).